Here is a 428-residue protein sequence, read N- to C-terminus: Forkhead box protein B2 (428 aa).

Positions 12–103 form a DNA-binding region, fork-head; that stretch reads QKPPYSYISL…GDMFENGSFL (92 aa). 2 disordered regions span residues 118–217 and 408–428; these read HLHS…MQEA and PTAA…LVHS. The span at 136 to 163 shows a compositional bias: basic residues; the sequence is LHPHHPHHAHHHHHHHHHAAHHHHHHHP. Composition is skewed to pro residues over residues 164–174 and 183–192; these read PQPPPPPPPHM and APAPQPPHLP. Residues 193 to 217 show a composition bias toward low complexity; that stretch reads SQPAQQPQPQSQPPQTSHPGKMQEA.

Its subcellular location is the nucleus. Transcription factor. In Mus musculus (Mouse), this protein is Forkhead box protein B2 (Foxb2).